The following is a 271-amino-acid chain: uncharacterized protein (271 aa).

An AB hydrolase-1 domain is found at 24 to 124 (PIILLVHGGG…QVHVMIPHEP (101 aa)).

The protein belongs to the AB hydrolase superfamily.

This is an uncharacterized protein from Bacillus subtilis (strain 168).